The primary structure comprises 339 residues: Nitrilase 2 (339 aa).

Position 2 is an N-acetylserine (Ser-2). Residues 18 to 290 (VRATIVQAST…EGLITADLDL (273 aa)) form the CN hydrolase domain. The active-site Proton acceptor is the Glu-58. Lys-145 functions as the Proton donor in the catalytic mechanism. The Nucleophile role is filled by Cys-179.

The protein belongs to the carbon-nitrogen hydrolase superfamily. Nitrilase family.

Its subcellular location is the cell membrane. It carries out the reaction a nitrile + 2 H2O = a carboxylate + NH4(+). Can convert indole-3-acetonitrile to the plant hormone indole-3-acetic acid. The polypeptide is Nitrilase 2 (NIT2) (Arabidopsis thaliana (Mouse-ear cress)).